The following is a 156-amino-acid chain: PopC secretion inhibitor (156 aa).

A disordered region spans residues 1–89 (MNPGSAPWER…PVRSRAEVHQ (89 aa)). Over residues 8-28 (WERRTRERMRAMSRKNGEWGD) the composition is skewed to basic and acidic residues.

As to quaternary structure, interacts with PopC in non-starving cells.

The protein localises to the cytoplasm. With respect to regulation, in response to starvation, RelA is activated resulting in the accumulation of (p)ppGpp, which causes the degradation of PopD in an FtsH(D)-dependent manner, thereby releasing pre-formed PopC for secretion. Its function is as follows. Inhibitor of protease PopC. In non-starving cells, forms a cytoplasmic complex with PopC and inhibits PopC secretion and activity. This is PopC secretion inhibitor from Myxococcus xanthus (strain DK1622).